We begin with the raw amino-acid sequence, 204 residues long: NADH-quinone oxidoreductase subunit C (204 aa).

This sequence belongs to the complex I 30 kDa subunit family. NDH-1 is composed of 14 different subunits. Subunits NuoB, C, D, E, F, and G constitute the peripheral sector of the complex.

The protein resides in the cell inner membrane. It catalyses the reaction a quinone + NADH + 5 H(+)(in) = a quinol + NAD(+) + 4 H(+)(out). In terms of biological role, NDH-1 shuttles electrons from NADH, via FMN and iron-sulfur (Fe-S) centers, to quinones in the respiratory chain. The immediate electron acceptor for the enzyme in this species is believed to be ubiquinone. Couples the redox reaction to proton translocation (for every two electrons transferred, four hydrogen ions are translocated across the cytoplasmic membrane), and thus conserves the redox energy in a proton gradient. This is NADH-quinone oxidoreductase subunit C from Vesicomyosocius okutanii subsp. Calyptogena okutanii (strain HA).